The primary structure comprises 80 residues: MYSGVVSRTNIEIDDELVAAAQRMYRLDSKRSAVDLALRRLVGEPLGRDEALALQGSGFDFSNDEIESFSDTDRKLADES.

The interval Asp-60–Ser-80 is disordered. Glu-67 is a Mg(2+) binding site. Glu-67 serves as a coordination point for Mn(2+). Residues Asp-71–Ser-80 are compositionally biased toward basic and acidic residues.

As to quaternary structure, forms a VapB15-VapC15(2) heterotrimer and a VapB15(2)-VapC15(2) heterotetramer; each toxin pair forms a homodimer which creates a channel in which the antitoxin binds. Mg(2+) serves as cofactor. The cofactor is Mn(2+).

In terms of biological role, antitoxin component of a type II toxin-antitoxin (TA) system. Neutralizes the toxic effect of cognate toxin VapC15. This Mycobacterium tuberculosis (strain CDC 1551 / Oshkosh) protein is Antitoxin VapB15 (vapB15).